A 447-amino-acid polypeptide reads, in one-letter code: DNA primase DnaG (447 aa).

Residues 200–274 (DSIIVVEGRA…DIDYVARAPE (75 aa)) form the Toprim domain. Mg(2+) contacts are provided by E206, D248, and D250. The disordered stretch occupies residues 316–339 (ERRRGGARKQEYTKKGSLNPQPQV).

It belongs to the archaeal DnaG primase family. As to quaternary structure, forms a ternary complex with MCM helicase and DNA. Component of the archaeal exosome complex. Mg(2+) is required as a cofactor.

It catalyses the reaction ssDNA + n NTP = ssDNA/pppN(pN)n-1 hybrid + (n-1) diphosphate.. In terms of biological role, RNA polymerase that catalyzes the synthesis of short RNA molecules used as primers for DNA polymerase during DNA replication. Also part of the exosome, which is a complex involved in RNA degradation. Acts as a poly(A)-binding protein that enhances the interaction between heteromeric, adenine-rich transcripts and the exosome. This Pyrococcus furiosus (strain ATCC 43587 / DSM 3638 / JCM 8422 / Vc1) protein is DNA primase DnaG.